The following is a 460-amino-acid chain: tRNA modification GTPase MnmE (460 aa).

(6S)-5-formyl-5,6,7,8-tetrahydrofolate-binding residues include R23, E86, and R126. The 160-residue stretch at 222-381 folds into the TrmE-type G domain; sequence GLSTAIIGRP…LEAAIASLFF (160 aa). N232 contacts K(+). Residues 232-237, 251-257, and 276-279 contribute to the GTP site; these read NVGKSS, TDIAGTT, and DTAG. Mg(2+) is bound at residue S236. Residues T251, I253, and T256 each contribute to the K(+) site. T257 is a binding site for Mg(2+). Position 460 (K460) interacts with (6S)-5-formyl-5,6,7,8-tetrahydrofolate.

Belongs to the TRAFAC class TrmE-Era-EngA-EngB-Septin-like GTPase superfamily. TrmE GTPase family. As to quaternary structure, homodimer. Heterotetramer of two MnmE and two MnmG subunits. K(+) is required as a cofactor.

The protein localises to the cytoplasm. Exhibits a very high intrinsic GTPase hydrolysis rate. Involved in the addition of a carboxymethylaminomethyl (cmnm) group at the wobble position (U34) of certain tRNAs, forming tRNA-cmnm(5)s(2)U34. The chain is tRNA modification GTPase MnmE from Exiguobacterium sibiricum (strain DSM 17290 / CCUG 55495 / CIP 109462 / JCM 13490 / 255-15).